A 62-amino-acid chain; its full sequence is Photosystem II reaction center protein Z (62 aa).

A run of 2 helical transmembrane segments spans residues 8–28 (ALLA…VVFA) and 41–61 (FSGL…NSFV).

Belongs to the PsbZ family. In terms of assembly, PSII is composed of 1 copy each of membrane proteins PsbA, PsbB, PsbC, PsbD, PsbE, PsbF, PsbH, PsbI, PsbJ, PsbK, PsbL, PsbM, PsbT, PsbY, PsbZ, Psb30/Ycf12, at least 3 peripheral proteins of the oxygen-evolving complex and a large number of cofactors. It forms dimeric complexes.

The protein resides in the plastid. It is found in the chloroplast thylakoid membrane. Controls the interaction of photosystem II (PSII) cores with the light-harvesting antenna, aiding in the dissipation of excitation energy within PSII. PSII is a light-driven water plastoquinone oxidoreductase, using light energy to abstract electrons from H(2)O, generating a proton gradient subsequently used for ATP formation. The protein is Photosystem II reaction center protein Z of Chlamydomonas reinhardtii (Chlamydomonas smithii).